Consider the following 238-residue polypeptide: Pyridoxine 5'-phosphate synthase (238 aa).

A 3-amino-2-oxopropyl phosphate-binding site is contributed by N6. Residue 8-9 (DH) coordinates 1-deoxy-D-xylulose 5-phosphate. R17 is a binding site for 3-amino-2-oxopropyl phosphate. H42 (proton acceptor) is an active-site residue. The 1-deoxy-D-xylulose 5-phosphate site is built by R44 and H49. The Proton acceptor role is filled by E69. T99 lines the 1-deoxy-D-xylulose 5-phosphate pocket. H190 acts as the Proton donor in catalysis. Residues G191 and 212 to 213 (GH) each bind 3-amino-2-oxopropyl phosphate.

Belongs to the PNP synthase family. As to quaternary structure, homooctamer; tetramer of dimers.

The protein resides in the cytoplasm. The catalysed reaction is 3-amino-2-oxopropyl phosphate + 1-deoxy-D-xylulose 5-phosphate = pyridoxine 5'-phosphate + phosphate + 2 H2O + H(+). The protein operates within cofactor biosynthesis; pyridoxine 5'-phosphate biosynthesis; pyridoxine 5'-phosphate from D-erythrose 4-phosphate: step 5/5. Its function is as follows. Catalyzes the complicated ring closure reaction between the two acyclic compounds 1-deoxy-D-xylulose-5-phosphate (DXP) and 3-amino-2-oxopropyl phosphate (1-amino-acetone-3-phosphate or AAP) to form pyridoxine 5'-phosphate (PNP) and inorganic phosphate. This chain is Pyridoxine 5'-phosphate synthase, found in Chlorobium phaeobacteroides (strain BS1).